A 379-amino-acid polypeptide reads, in one-letter code: MKVDFLVIKVEKLSSLRVFYFFLFFFESKYVEDQKIKDAKLLQLDFDTIRLATNDFSPYNHLGEGGFGAVYKGVLDSGEEIAVKRLSMKSGQGDNEFVNEVSLVAKLQHRNLVRLLGFCFKGEERLLIYEFFKNTSLEKFIFDSDRRMILDWEKRYRIISGVARGLLYLHEDSHFKIIHRDMKASNVLLDDAMNPKIADFGMVKLFNTDQTSQTMFTSKVAGTYGYMAPEYAMSGQFSVKTDVFSFGVLVLEIIKGKKNNWSPEEQSSLFLLSYVWKCWREGEVLNIVDPSLIETRGLSDEIRKCIHIGLLCVQENPGSRPTMASIVRMLNANSFTLPRPLQPAFYSGVVDSSSRDNNHTRNPRIASLNDVTITELDPR.

The Protein kinase domain occupies 56–336 (FSPYNHLGEG…VRMLNANSFT (281 aa)). Residues 62–70 (LGEGGFGAV) and K84 contribute to the ATP site. The residue at position 129 (Y129) is a Phosphotyrosine. Residue D181 is the Proton acceptor of the active site. S185 is subject to Phosphoserine. A Phosphothreonine modification is found at T223. A Phosphotyrosine modification is found at Y231.

This sequence belongs to the protein kinase superfamily. Ser/Thr protein kinase family. CRK subfamily.

The catalysed reaction is L-seryl-[protein] + ATP = O-phospho-L-seryl-[protein] + ADP + H(+). The enzyme catalyses L-threonyl-[protein] + ATP = O-phospho-L-threonyl-[protein] + ADP + H(+). The polypeptide is Cysteine-rich receptor-like protein kinase 44 (Arabidopsis thaliana (Mouse-ear cress)).